The chain runs to 449 residues: Nucleoporin NUP42 (449 aa).

A C3H1-type zinc finger spans residues 1–25 (MAICSFFLQGRCRYGEKCWNEHPRG). Disordered regions lie at residues 22–84 (HPRG…GFDN) and 218–237 (DMTSGYNGQQKPAFGSSSFP). 2 stretches are compositionally biased toward polar residues: residues 47–83 (WGSSSQRYVQPSSFSRSTTWVNRDNEKPSSGSHSGFD) and 218–227 (DMTSGYNGQQ). FG repeat units follow at residues 231–232 (FG), 274–275 (FG), 284–285 (FG), 305–306 (FG), 314–315 (FG), 335–336 (FG), and 347–348 (FG).

In terms of assembly, probable component of the nuclear pore complex (NPC).

The protein resides in the nucleus. It localises to the nuclear pore complex. It is found in the nucleus membrane. Required for the export of mRNAs containing poly(A) tails from the nucleus into the cytoplasm. The protein is Nucleoporin NUP42 (nup42) of Xenopus tropicalis (Western clawed frog).